The sequence spans 748 residues: Cytosolic phospholipase A2 (748 aa).

Residues 1-178 are phospholipid binding; that stretch reads MSFIDPYQHI…MKSFLGEENS (178 aa). The C2 domain maps to 6-124; that stretch reads PYQHIVVEHQ…GEKKEVQLTF (119 aa). 7 residues coordinate Ca(2+): aspartate 40, threonine 41, aspartate 43, asparagine 65, aspartate 93, alanine 94, and asparagine 95. The PLA2c domain maps to 138-740; the sequence is VCSSTDLRFS…SSVEARRFFN (603 aa). Catalysis depends on serine 228, which acts as the Nucleophile. The segment at 431 to 459 is disordered; the sequence is SNDSSDSEDESQHPKGTENSEANEEYQNS. Positions 449-459 are enriched in polar residues; that stretch reads NSEANEEYQNS. A Phosphoserine; by MAPK modification is found at serine 505. Aspartate 549 functions as the Proton acceptor in the catalytic mechanism.

Post-translationally, activated by phosphorylation on a serine residue.

The protein localises to the cytoplasm. It is found in the cytoplasmic vesicle. It carries out the reaction a 1,2-diacyl-sn-glycero-3-phosphocholine + H2O = a 1-acyl-sn-glycero-3-phosphocholine + a fatty acid + H(+). The catalysed reaction is a 1-acyl-sn-glycero-3-phosphocholine + H2O = sn-glycerol 3-phosphocholine + a fatty acid + H(+). Stimulated by agonists such as ATP, EGF, thrombin and bradykinin as well as by cytosolic Ca(2+). Functionally, selectively hydrolyzes arachidonyl phospholipids in the sn-2 position releasing arachidonic acid. Together with its lysophospholipid activity, it is implicated in the initiation of the inflammatory response. This Gallus gallus (Chicken) protein is Cytosolic phospholipase A2 (PLA2G4A).